The chain runs to 145 residues: D-aminoacyl-tRNA deacylase (145 aa).

Positions 137–138 (GP) match the Gly-cisPro motif, important for rejection of L-amino acids motif.

It belongs to the DTD family. In terms of assembly, homodimer.

The protein resides in the cytoplasm. It carries out the reaction glycyl-tRNA(Ala) + H2O = tRNA(Ala) + glycine + H(+). The enzyme catalyses a D-aminoacyl-tRNA + H2O = a tRNA + a D-alpha-amino acid + H(+). In terms of biological role, an aminoacyl-tRNA editing enzyme that deacylates mischarged D-aminoacyl-tRNAs. Also deacylates mischarged glycyl-tRNA(Ala), protecting cells against glycine mischarging by AlaRS. Acts via tRNA-based rather than protein-based catalysis; rejects L-amino acids rather than detecting D-amino acids in the active site. By recycling D-aminoacyl-tRNA to D-amino acids and free tRNA molecules, this enzyme counteracts the toxicity associated with the formation of D-aminoacyl-tRNA entities in vivo and helps enforce protein L-homochirality. This Shewanella woodyi (strain ATCC 51908 / MS32) protein is D-aminoacyl-tRNA deacylase.